Reading from the N-terminus, the 245-residue chain is Ribonuclease PH (245 aa).

Phosphate-binding positions include Arg-86 and 124 to 126; that span reads GTR.

Belongs to the RNase PH family. In terms of assembly, homohexameric ring arranged as a trimer of dimers.

It carries out the reaction tRNA(n+1) + phosphate = tRNA(n) + a ribonucleoside 5'-diphosphate. Its function is as follows. Phosphorolytic 3'-5' exoribonuclease that plays an important role in tRNA 3'-end maturation. Removes nucleotide residues following the 3'-CCA terminus of tRNAs; can also add nucleotides to the ends of RNA molecules by using nucleoside diphosphates as substrates, but this may not be physiologically important. Probably plays a role in initiation of 16S rRNA degradation (leading to ribosome degradation) during starvation. The chain is Ribonuclease PH from Bacillus cereus (strain B4264).